The chain runs to 166 residues: NADPH-dependent 7-cyano-7-deazaguanine reductase (166 aa).

Cysteine 57 (thioimide intermediate) is an active-site residue. Aspartate 64 functions as the Proton donor in the catalytic mechanism. Residues 79 to 81 (VES) and 98 to 99 (HE) contribute to the substrate site.

Belongs to the GTP cyclohydrolase I family. QueF type 1 subfamily.

The protein resides in the cytoplasm. It carries out the reaction 7-aminomethyl-7-carbaguanine + 2 NADP(+) = 7-cyano-7-deazaguanine + 2 NADPH + 3 H(+). The protein operates within tRNA modification; tRNA-queuosine biosynthesis. Functionally, catalyzes the NADPH-dependent reduction of 7-cyano-7-deazaguanine (preQ0) to 7-aminomethyl-7-deazaguanine (preQ1). The protein is NADPH-dependent 7-cyano-7-deazaguanine reductase of Staphylococcus epidermidis (strain ATCC 35984 / DSM 28319 / BCRC 17069 / CCUG 31568 / BM 3577 / RP62A).